The sequence spans 360 residues: MARASPLLMICLVLGSSFATYNLVTMIIHYGSADSLATEDGGLFFDPIVEMPEHVKNTKTSKAPFHIALTATDAIYNKWQCRIMYYWYKKQRSLPGSEMGGFTRILHSGKADNLMDEIPTVVVDPLPEGLDRGYVVLNRPWAFVQWLEKANIEEEYILMAEPDHVFVRPLPNLAFGENPAAFPFFYIKPKENEKIVRKYYPEENGPVTNVDPIGNSPVIIRKDLIAKIAPTWMNISMKMKEDPETDKAFGWVLEMYGYAVASALHGVRHILRKDFMLQPPWDTETFNKYIIHYTYGCDYNLKGELTYGKIGEWRFDKRSHLRGPPPRNLPLPPPGVPESVATLVKMVNEASANIPNWDTL.

The helical; Signal-anchor transmembrane segment at 13–33 (VLGSSFATYNLVTMIIHYGSA) threads the bilayer.

It is found in the golgi apparatus membrane. The catalysed reaction is trans-4-hydroxy-L-prolyl-[protein] + UDP-beta-L-arabinofuranose = O-(beta-L-arabinofuranosyl)-trans-4-hydroxy-L-prolyl-[protein] + UDP + H(+). Glycosyltransferase involved in the O-arabinosylation of several proteins including extensins and small signaling peptides. Catalyzes the transfer of the initial L-arabinose to the hydroxyl group of Hyp residues. Probably involved in the arabinosylation of CLAVATA3/ESR-related (CLE) signaling peptides that move from root to shoot, to interact with SUNN receptor kinase signaling that regulates nodulation. Involved in long distance nodulation signaling events. Involved in the autoregulation of nodulation (AON), a long distance systemic signaling from root to shoot and back again, which allows legumes to limit the number of root nodules formed based on available nitrogen and previous rhizobial colonization. Functions in the root, upstream of the shoot receptor kinase SUNN and via CLE peptide, to control AON. The polypeptide is Hydroxyproline O-arabinosyltransferase RDN2 (Medicago truncatula (Barrel medic)).